Here is a 579-residue protein sequence, read N- to C-terminus: Membrane protein insertase YidC (579 aa).

A helical transmembrane segment spans residues 10–30 (LVIVTILSALILFGWSFVTKH). Residues 35–61 (PPAPTQQGKNQPKAELTAEESGDKPLK) form a disordered region. A run of 5 helical transmembrane segments spans residues 330-350 (FDKAIDWGWFAIIEKVFFYYL), 351-371 (DWLFLHVGNYGLAIILMVFTI), 423-443 (VNPFAGCLPMFIQFPIFIALY), 478-498 (LLHFTPPHFLMIGVLPIILGI), and 523-543 (PLISVIFMAPLAAGLQVYYIF). The span at 560–572 (STPEERQDRAERK) shows a compositional bias: basic and acidic residues. The tract at residues 560-579 (STPEERQDRAERKRPSKKKA) is disordered.

It belongs to the OXA1/ALB3/YidC family. Type 1 subfamily. As to quaternary structure, interacts with the Sec translocase complex via SecD. Specifically interacts with transmembrane segments of nascent integral membrane proteins during membrane integration.

It localises to the cell inner membrane. Its function is as follows. Required for the insertion and/or proper folding and/or complex formation of integral membrane proteins into the membrane. Involved in integration of membrane proteins that insert both dependently and independently of the Sec translocase complex, as well as at least some lipoproteins. Aids folding of multispanning membrane proteins. This is Membrane protein insertase YidC from Zymomonas mobilis subsp. mobilis (strain ATCC 31821 / ZM4 / CP4).